A 458-amino-acid chain; its full sequence is uncharacterized protein (458 aa).

Disordered stretches follow at residues 339-397 (GTGY…ARIL) and 434-458 (YNSEDEDFEYDSDSEDDDSDSEDDC). Composition is skewed to acidic residues over residues 344 to 390 (SDSD…EEEP) and 436 to 458 (SEDEDFEYDSDSEDDDSDSEDDC).

This is an uncharacterized protein from Invertebrate iridescent virus 3 (IIV-3).